The sequence spans 173 residues: Phosphopantetheine adenylyltransferase (173 aa).

Thr9 contacts substrate. ATP contacts are provided by residues 9-10 (TF) and His17. Substrate contacts are provided by Lys41, Thr75, and Arg89. Residues 90 to 92 (GLR), Glu100, and 125 to 131 (HIYLSSS) each bind ATP.

This sequence belongs to the bacterial CoaD family. Homohexamer. It depends on Mg(2+) as a cofactor.

It is found in the cytoplasm. The enzyme catalyses (R)-4'-phosphopantetheine + ATP + H(+) = 3'-dephospho-CoA + diphosphate. It participates in cofactor biosynthesis; coenzyme A biosynthesis; CoA from (R)-pantothenate: step 4/5. Its function is as follows. Reversibly transfers an adenylyl group from ATP to 4'-phosphopantetheine, yielding dephospho-CoA (dPCoA) and pyrophosphate. The protein is Phosphopantetheine adenylyltransferase of Methylacidiphilum infernorum (isolate V4) (Methylokorus infernorum (strain V4)).